A 116-amino-acid polypeptide reads, in one-letter code: MRHQCRVPQLGRPADQRKAMLRGLTTQLIREGRVTTTKARAKALRDEAERMITLAKEGSLASRRRVLGYVYDKQLVHALFEKAPDRYSDRKGGYTRITRTVRRRGDNAEMAIIELV.

Belongs to the bacterial ribosomal protein bL17 family. In terms of assembly, part of the 50S ribosomal subunit. Contacts protein L32.

In Synechococcus sp. (strain WH7803), this protein is Large ribosomal subunit protein bL17.